The following is a 285-amino-acid chain: tRNA (adenine(58)-N(1))-methyltransferase catalytic subunit TRMT61A (285 aa).

Ser2 carries the post-translational modification N-acetylserine. Substrate regions lie at residues 20 to 22 (LGH), 35 to 42 (QTQTRHGV), 64 to 65 (GW), 85 to 89 (QILYS), and 110 to 117 (SGTGSGSV). Residues Leu87, 114–116 (SGS), Glu135, Arg140, 163–164 (DV), and Asp181 each bind S-adenosyl-L-methionine. 2 substrate regions span residues 180-183 (LDIP) and 205-212 (SFSPCIEQ). Residue Thr274 coordinates substrate.

The protein belongs to the class I-like SAM-binding methyltransferase superfamily. TRM61 family. Heterotetramer; composed of two copies of TRMT6 and two copies of TRMT61A.

The protein localises to the nucleus. It catalyses the reaction adenosine(58) in tRNA + S-adenosyl-L-methionine = N(1)-methyladenosine(58) in tRNA + S-adenosyl-L-homocysteine + H(+). The enzyme catalyses an adenosine in mRNA + S-adenosyl-L-methionine = an N(1)-methyladenosine in mRNA + S-adenosyl-L-homocysteine + H(+). Catalytic subunit of tRNA (adenine-N(1)-)-methyltransferase, which catalyzes the formation of N(1)-methyladenine at position 58 (m1A58) in initiator methionyl-tRNA. Catalytic subunit of mRNA N(1)-methyltransferase complex, which mediates methylation of adenosine residues at the N(1) position of a small subset of mRNAs: N(1) methylation takes place in tRNA T-loop-like structures of mRNAs and is only present at low stoichiometries. The protein is tRNA (adenine(58)-N(1))-methyltransferase catalytic subunit TRMT61A (TRMT61A) of Bos taurus (Bovine).